Consider the following 281-residue polypeptide: UPF0273 protein PAE3143 (281 aa).

Residues 4 to 248 (PRVRSYVPGL…YIKITGSSVR (245 aa)) form the KaiC domain. ATP is bound at residue 31-38 (GGPGTGKS).

Belongs to the UPF0273 family.

The sequence is that of UPF0273 protein PAE3143 from Pyrobaculum aerophilum (strain ATCC 51768 / DSM 7523 / JCM 9630 / CIP 104966 / NBRC 100827 / IM2).